The chain runs to 875 residues: Alanine--tRNA ligase (875 aa).

Residues His564, His568, Cys666, and His670 each contribute to the Zn(2+) site.

This sequence belongs to the class-II aminoacyl-tRNA synthetase family. As to quaternary structure, homotetramer. The cofactor is Zn(2+).

It is found in the cytoplasm. The catalysed reaction is tRNA(Ala) + L-alanine + ATP = L-alanyl-tRNA(Ala) + AMP + diphosphate. Its function is as follows. Catalyzes the attachment of alanine to tRNA(Ala) in a two-step reaction: alanine is first activated by ATP to form Ala-AMP and then transferred to the acceptor end of tRNA(Ala). Also edits incorrectly charged Ser-tRNA(Ala) and Gly-tRNA(Ala) via its editing domain. The polypeptide is Alanine--tRNA ligase (Citrobacter koseri (strain ATCC BAA-895 / CDC 4225-83 / SGSC4696)).